We begin with the raw amino-acid sequence, 146 residues long: MNKIIIYTDGGCRGNPGIGGWGVWLKYGDYDKKLQGVQQDTTNNQMELTATIKALEVIKSNDIAIDLFTDSKYVITGISEWIKNWKAKGWKTANKKPVKNIDLWQRLDVLNNQHNVTWHWVKGHSGDKGNDMADALANLAMDKIST.

The region spanning 1–142 is the RNase H type-1 domain; the sequence is MNKIIIYTDG…ADALANLAMD (142 aa). Mg(2+) is bound by residues Asp-9, Glu-47, Asp-70, and Asp-134.

This sequence belongs to the RNase H family. In terms of assembly, monomer. It depends on Mg(2+) as a cofactor.

It localises to the cytoplasm. It catalyses the reaction Endonucleolytic cleavage to 5'-phosphomonoester.. Endonuclease that specifically degrades the RNA of RNA-DNA hybrids. This Ruthia magnifica subsp. Calyptogena magnifica protein is Ribonuclease H.